Reading from the N-terminus, the 250-residue chain is MNETEKSTHFGYQTVPTDQKTDKVKHVFESVAAKYDLMNDLMSLGIHRWWKDFAITQCRLRTGQRILDLAGGTGDLAKRISPLVGDEGEVVIADINAAMLNVGRRRLLDQGIFRNIQFIQADAEKLPFPNNFFDRIVIGFGLRNVTNQLAALQSMHRVIKPGGFVVILEFSKPTLAPLKAVYDAYSFQLLPRLGKLVAKDEESYRYLVESIRMHPDQEALLSKMTDARFEDCDYHNLSGGIVAVHRGYKF.

S-adenosyl-L-methionine is bound by residues T73, D94, and D122–A123.

This sequence belongs to the class I-like SAM-binding methyltransferase superfamily. MenG/UbiE family.

It carries out the reaction a 2-demethylmenaquinol + S-adenosyl-L-methionine = a menaquinol + S-adenosyl-L-homocysteine + H(+). The enzyme catalyses a 2-methoxy-6-(all-trans-polyprenyl)benzene-1,4-diol + S-adenosyl-L-methionine = a 5-methoxy-2-methyl-3-(all-trans-polyprenyl)benzene-1,4-diol + S-adenosyl-L-homocysteine + H(+). Its pathway is quinol/quinone metabolism; menaquinone biosynthesis; menaquinol from 1,4-dihydroxy-2-naphthoate: step 2/2. It functions in the pathway cofactor biosynthesis; ubiquinone biosynthesis. In terms of biological role, methyltransferase required for the conversion of demethylmenaquinol (DMKH2) to menaquinol (MKH2) and the conversion of 2-polyprenyl-6-methoxy-1,4-benzoquinol (DDMQH2) to 2-polyprenyl-3-methyl-6-methoxy-1,4-benzoquinol (DMQH2). This chain is Ubiquinone/menaquinone biosynthesis C-methyltransferase UbiE, found in Coxiella burnetii (strain CbuK_Q154) (Coxiella burnetii (strain Q154)).